We begin with the raw amino-acid sequence, 433 residues long: Adenylosuccinate synthetase (433 aa).

GTP contacts are provided by residues 13 to 19 (GDEGKGK) and 41 to 43 (GHT). Asp-14 (proton acceptor) is an active-site residue. Mg(2+)-binding residues include Asp-14 and Gly-41. IMP is bound by residues 14–17 (DEGK), 39–42 (NAGH), Thr-130, Arg-144, Gln-225, Thr-240, and Arg-304. His-42 serves as the catalytic Proton donor. Residue 300-306 (STTGRKR) coordinates substrate. GTP is bound by residues Arg-306, 332–334 (KLD), and 414–416 (STG).

It belongs to the adenylosuccinate synthetase family. In terms of assembly, homodimer. Mg(2+) is required as a cofactor.

It is found in the cytoplasm. It catalyses the reaction IMP + L-aspartate + GTP = N(6)-(1,2-dicarboxyethyl)-AMP + GDP + phosphate + 2 H(+). Its pathway is purine metabolism; AMP biosynthesis via de novo pathway; AMP from IMP: step 1/2. In terms of biological role, plays an important role in the de novo pathway of purine nucleotide biosynthesis. Catalyzes the first committed step in the biosynthesis of AMP from IMP. The sequence is that of Adenylosuccinate synthetase from Buchnera aphidicola subsp. Acyrthosiphon pisum (strain APS) (Acyrthosiphon pisum symbiotic bacterium).